Here is a 275-residue protein sequence, read N- to C-terminus: Elongation factor Ts (275 aa).

Positions 76-79 are involved in Mg(2+) ion dislocation from EF-Tu; the sequence is TDFV.

The protein belongs to the EF-Ts family.

It is found in the cytoplasm. In terms of biological role, associates with the EF-Tu.GDP complex and induces the exchange of GDP to GTP. It remains bound to the aminoacyl-tRNA.EF-Tu.GTP complex up to the GTP hydrolysis stage on the ribosome. This chain is Elongation factor Ts, found in Corynebacterium diphtheriae (strain ATCC 700971 / NCTC 13129 / Biotype gravis).